The sequence spans 1529 residues: Mediator of RNA polymerase II transcription subunit 1.1 (1529 aa).

Disordered stretches follow at residues 685–740 (PDAA…VVGE), 807–919 (QYRM…MRDN), and 933–1529 (PDIE…IDDE). Positions 693–702 (GKQRKPRAKK) are enriched in basic residues. Composition is skewed to low complexity over residues 722-739 (GAAA…GVVG) and 807-828 (QYRM…PQQQ). Positions 894–905 (TPSPLSAPPKPF) are enriched in pro residues. Positions 908 to 919 (EQHHFGTKMRDN) are enriched in basic and acidic residues. Low complexity-rich tracts occupy residues 958-990 (SSSS…TAQT) and 1008-1023 (QEQA…IQQQ). A coiled-coil region spans residues 1008-1032 (QEQALQKQEQQRIQQQDSVDSTNSE). 3 stretches are compositionally biased toward polar residues: residues 1051–1061 (NQVNRVMNMSN), 1068–1089 (GSST…STGS), and 1096–1105 (TPGTSSNIAQ). 4 stretches are compositionally biased toward basic and acidic residues: residues 1113 to 1130 (LKKE…EKLI), 1137 to 1185 (LKVD…ERDK), 1192 to 1240 (RDRT…KELS), and 1262 to 1278 (PKKD…KDES). Positions 1169–1202 (EKEDKSQREKDKKERDKERKRRDRDRTEAKKEKD) form a coiled coil. The segment covering 1279 to 1288 (IPGPSTSSES) has biased composition (low complexity). The segment covering 1289 to 1304 (STRKEVAPAPISRKES) has biased composition (basic and acidic residues). The segment covering 1349–1365 (SYSGSSNAGPISSSSRG) has biased composition (low complexity). 2 stretches are compositionally biased toward pro residues: residues 1375–1386 (PVLPPPALPMRG) and 1477–1500 (QPPP…APPS).

This sequence belongs to the Mediator complex subunit 1 family. In terms of assembly, component of the Mediator complex.

It is found in the nucleus. In terms of biological role, component of the Mediator complex, a coactivator involved in the regulated transcription of nearly all RNA polymerase II-dependent genes. Mediator functions as a bridge to convey information from gene-specific regulatory proteins to the basal RNA polymerase II transcription machinery. Mediator is recruited to promoters by direct interactions with regulatory proteins and serves as a scaffold for the assembly of a functional preinitiation complex with RNA polymerase II and the general transcription factors. The polypeptide is Mediator of RNA polymerase II transcription subunit 1.1 (sop-3) (Caenorhabditis briggsae).